The primary structure comprises 712 residues: Osmolarity two-component system protein SSK1 (712 aa).

Residues 73–114 (ADNTSSNNTNDNSCRSKSNGAGSGANLSVNSNTKSSVSPTAG) form a disordered region. Residues 74–85 (DNTSSNNTNDNS) show a composition bias toward low complexity. A compositionally biased stretch (polar residues) spans 87–113 (RSKSNGAGSGANLSVNSNTKSSVSPTA). Phosphoserine is present on residues Ser110, Ser195, Ser327, Ser351, Ser368, and Ser380. A disordered region spans residues 340-362 (KADLKGKDGNSSPQEFKLITDEE). Residues 448–468 (EVQRRKEDVTPASPILTSSQT) form a disordered region. The 143-residue stretch at 505 to 647 (NVLIVEDNVI…WLSKKITEWG (143 aa)) folds into the Response regulatory domain. The residue at position 554 (Asp554) is a 4-aspartylphosphate. Positions 672–712 (KSPQKPIAPSNPHSFKQATSMTPTHSPVRKNSNLSPTQIEL) are disordered. Ser673 bears the Phosphoserine mark. Residues 682–712 (NPHSFKQATSMTPTHSPVRKNSNLSPTQIEL) show a composition bias toward polar residues. Position 693 is a phosphothreonine (Thr693). Phosphoserine is present on residues Ser703 and Ser706.

The protein belongs to the SSK1 family. In terms of assembly, interacts with SSK2, SSK22 and YPD1. In terms of processing, the phosphorelay mechanism involves the sequential transfer of a phosphate group from 'His-576' (H1) to 'Asp-1144' (D1) of SLN1, then to 'His-64' (H2) of YPD1 and finally to Asp-554 (D2) of SSK1.

Its subcellular location is the cytoplasm. Its function is as follows. Final receptor of the SLN1-YPD1-SSK1 two-component regulatory system, which controls activity of the HOG1 pathway in response to changes in the osmolarity of the extracellular environment. Under normal osmotic conditions, maintained in a phosphorylated and inactive state by the phosphorelay intermediate protein YPD1. Under conditions of high osmolarity, the histidine kinase SLN1 is no longer active and the unphosphorylated form of SSK1 interacts with and activates SSK2 and SSK22, two MAPKKKs that further stimulate the PBS2-HOG1 MAPKK-MAPK cascade. Unphosphorylated SSK1 is subsequently degraded by the UBC7-dependent ubiquitin-proteasome system to down-regulate the HOG1 pathway after completion of the osmotic adaptation. This Saccharomyces cerevisiae (strain ATCC 204508 / S288c) (Baker's yeast) protein is Osmolarity two-component system protein SSK1.